Reading from the N-terminus, the 294-residue chain is MQTFHHQDTGSEDFRQNTMDEKWADDDEFSTPQITQNADGTKTIVTHRMDDGKKYKRSVTIKNQSVTEKVLNCVAERSKWTKYGKELGAPPGPNRMTTTIGEDIVFVLGLKSDQPEEEVEEEEAAAAAPRVGEDKGVKCRLCQGPHFTSKCPYKETLGGSTAAGGMGRSLGGDEPAGAAKTGGYVPPHLRNKGPGGPGGPGGAAGGRSDDDDELTLRVTNLSEEATDDDLRRMFGKYGMINRVYVAKDRDTGRPRGFAFVTYTLKSHAQAALEAMDGHGFDNLIMKVDYSKKRN.

Positions 1–22 (MQTFHHQDTGSEDFRQNTMDEK) are enriched in basic and acidic residues. 2 disordered regions span residues 1 to 42 (MQTF…DGTK) and 164 to 211 (GGMG…SDDD). Over residues 30 to 42 (STPQITQNADGTK) the composition is skewed to polar residues. Residues 193–205 (GPGGPGGPGGAAG) are compositionally biased toward gly residues. The region spanning 214 to 292 (LTLRVTNLSE…LIMKVDYSKK (79 aa)) is the RRM domain.

The protein belongs to the eIF-3 subunit G family. As to quaternary structure, component of the eukaryotic translation initiation factor 3 (eIF-3) complex.

The protein localises to the cytoplasm. RNA-binding component of the eukaryotic translation initiation factor 3 (eIF-3) complex, which is involved in protein synthesis of a specialized repertoire of mRNAs and, together with other initiation factors, stimulates binding of mRNA and methionyl-tRNAi to the 40S ribosome. The eIF-3 complex specifically targets and initiates translation of a subset of mRNAs involved in cell proliferation. This subunit can bind 18S rRNA. This chain is Eukaryotic translation initiation factor 3 subunit G, found in Yarrowia lipolytica (strain CLIB 122 / E 150) (Yeast).